We begin with the raw amino-acid sequence, 760 residues long: uncharacterized protein (760 aa).

An N-terminal signal peptide occupies residues 1–23 (MVIKKGFFALSSCTLGLGLILTA). The N-palmitoyl cysteine moiety is linked to residue cysteine 24. The S-diacylglycerol cysteine moiety is linked to residue cysteine 24. Disordered regions lie at residues 220–262 (ANGK…NSDN) and 443–482 (YEIKAPTNSQNGNGTLLGSFTKSKSNGKEQSGQDEDNQTS). 2 stretches are compositionally biased toward polar residues: residues 222-257 (GKTTSTQTSPQPKNAVSSLQLKQAAEGTSTDNSQDA) and 448-472 (PTNSQNGNGTLLGSFTKSKSNGKEQ).

It belongs to the MG185/MG260 family.

It is found in the cell membrane. This is an uncharacterized protein from Mycoplasma pneumoniae (strain ATCC 29342 / M129 / Subtype 1) (Mycoplasmoides pneumoniae).